We begin with the raw amino-acid sequence, 57 residues long: UPF0391 membrane protein azo1765 (57 aa).

The next 2 membrane-spanning stretches (helical) occupy residues 1-21 (MIKW…FGFT) and 33-53 (VLFF…VGLG).

This sequence belongs to the UPF0391 family.

The protein resides in the cell membrane. This is UPF0391 membrane protein azo1765 from Azoarcus sp. (strain BH72).